The sequence spans 313 residues: Formimidoylglutamase (313 aa).

His130, Asp155, His157, Asp159, Asp241, and Asp243 together coordinate Mn(2+).

The protein belongs to the arginase family. Mn(2+) serves as cofactor.

It catalyses the reaction N-formimidoyl-L-glutamate + H2O = formamide + L-glutamate. It functions in the pathway amino-acid degradation; L-histidine degradation into L-glutamate; L-glutamate from N-formimidoyl-L-glutamate (hydrolase route): step 1/1. Its function is as follows. Catalyzes the conversion of N-formimidoyl-L-glutamate to L-glutamate and formamide. The protein is Formimidoylglutamase of Salmonella agona (strain SL483).